The primary structure comprises 124 residues: Cytochrome c2 (124 aa).

Position 1 is a pyrrolidone carboxylic acid (glutamine 1). Heme c contacts are provided by cysteine 15, cysteine 18, histidine 19, and methionine 100.

In terms of processing, binds 1 heme c group covalently per subunit.

The protein resides in the periplasm. In terms of biological role, cytochrome c2 is found mainly in purple, non-sulfur, photosynthetic bacteria where it functions as the electron donor to the oxidized bacteriochlorophyll in the photophosphorylation pathway. However, it may also have a role in the respiratory chain and is found in some non-photosynthetic bacteria. The polypeptide is Cytochrome c2 (cycA) (Cereibacter sphaeroides (Rhodobacter sphaeroides)).